The following is a 61-amino-acid chain: MSDKTIRIIQVRSVIGCTKKQKATIKALGLGRPNYQVEKQDNPCLRGQIRVVQHLVKVEEL.

This sequence belongs to the universal ribosomal protein uL30 family. In terms of assembly, part of the 50S ribosomal subunit.

The protein is Large ribosomal subunit protein uL30 of Chlorobium limicola (strain DSM 245 / NBRC 103803 / 6330).